Here is a 275-residue protein sequence, read N- to C-terminus: Putative pyruvate, phosphate dikinase regulatory protein (275 aa).

Gly149 to Thr156 provides a ligand contact to ADP.

The protein belongs to the pyruvate, phosphate/water dikinase regulatory protein family. PDRP subfamily.

The catalysed reaction is N(tele)-phospho-L-histidyl/L-threonyl-[pyruvate, phosphate dikinase] + ADP = N(tele)-phospho-L-histidyl/O-phospho-L-threonyl-[pyruvate, phosphate dikinase] + AMP + H(+). It carries out the reaction N(tele)-phospho-L-histidyl/O-phospho-L-threonyl-[pyruvate, phosphate dikinase] + phosphate + H(+) = N(tele)-phospho-L-histidyl/L-threonyl-[pyruvate, phosphate dikinase] + diphosphate. In terms of biological role, bifunctional serine/threonine kinase and phosphorylase involved in the regulation of the pyruvate, phosphate dikinase (PPDK) by catalyzing its phosphorylation/dephosphorylation. The sequence is that of Putative pyruvate, phosphate dikinase regulatory protein from Levilactobacillus brevis (strain ATCC 367 / BCRC 12310 / CIP 105137 / JCM 1170 / LMG 11437 / NCIMB 947 / NCTC 947) (Lactobacillus brevis).